Reading from the N-terminus, the 456-residue chain is Probable glycine dehydrogenase (decarboxylating) subunit 1 (456 aa).

The protein belongs to the GcvP family. N-terminal subunit subfamily. As to quaternary structure, the glycine cleavage system is composed of four proteins: P, T, L and H. In this organism, the P 'protein' is a heterodimer of two subunits.

It catalyses the reaction N(6)-[(R)-lipoyl]-L-lysyl-[glycine-cleavage complex H protein] + glycine + H(+) = N(6)-[(R)-S(8)-aminomethyldihydrolipoyl]-L-lysyl-[glycine-cleavage complex H protein] + CO2. Its function is as follows. The glycine cleavage system catalyzes the degradation of glycine. The P protein binds the alpha-amino group of glycine through its pyridoxal phosphate cofactor; CO(2) is released and the remaining methylamine moiety is then transferred to the lipoamide cofactor of the H protein. The sequence is that of Probable glycine dehydrogenase (decarboxylating) subunit 1 from Legionella pneumophila (strain Paris).